Reading from the N-terminus, the 984-residue chain is Rhoptry neck protein 4 (984 aa).

Positions 1–26 (MAIKNTLTGSGLLVLLTLACGTTVQS) are cleaved as a signal peptide. The tract at residues 24 to 300 (VQSSPPTPAP…TPIPASKGIY (277 aa)) is disordered. Composition is skewed to polar residues over residues 66 to 85 (PQKT…NSKV) and 92 to 105 (SDTT…TSES). Asparagine 81 is a glycosylation site (N-linked (GlcNAc...) asparagine). A compositionally biased stretch (pro residues) spans 106–117 (PPVPQLGTPPRP). Repeat unit 1 spans residues 129-172 (QPPTAAPRTSRSVDTGSGSDASTEQQAGGQKVVTPIPASKGIYP). Residues 135–156 (PRTSRSVDTGSGSDASTEQQAG) are compositionally biased toward polar residues. The span at 214-228 (TGRRRAKARNRKRHP) shows a compositional bias: basic residues. Residues 242 to 285 (QPPTTASRPSNGEGESQPPTAAPRTSRSVDTGSGSDASTEQQAG) are compositionally biased toward polar residues. The stretch at 258–301 (QPPTAAPRTSRSVDTGSGSDASTEQQAGGQKVVTPIPASKGIYP) is repeat 2. N-linked (GlcNAc...) asparagine glycosylation is found at asparagine 390 and asparagine 780. Residues 882 to 984 (GPTVSDESRR…EESTSKTSEL (103 aa)) form a disordered region. Positions 892 to 901 (MIHPVRHRSR) are enriched in basic residues. Residues 902-914 (TAPSSEAASTAAE) are compositionally biased toward low complexity. The N-linked (GlcNAc...) asparagine glycan is linked to asparagine 925. Over residues 967–984 (LKQSDTLIEESTSKTSEL) the composition is skewed to polar residues.

It is found in the secreted. Its subcellular location is the parasitophorous vacuole membrane. The protein is Rhoptry neck protein 4 (RON4) of Toxoplasma gondii.